The sequence spans 163 residues: Protein-export protein SecB (163 aa).

Belongs to the SecB family. Homotetramer, a dimer of dimers. One homotetramer interacts with 1 SecA dimer.

The protein resides in the cytoplasm. One of the proteins required for the normal export of preproteins out of the cell cytoplasm. It is a molecular chaperone that binds to a subset of precursor proteins, maintaining them in a translocation-competent state. It also specifically binds to its receptor SecA. The chain is Protein-export protein SecB from Pseudomonas aeruginosa (strain LESB58).